The following is a 942-amino-acid chain: Endoprotease bli-4 (942 aa).

Residues 1 to 22 (MRISIGRIAWQILAVLIAVAFT) form the signal peptide. Residues 23-116 (IEHDSICDES…EQRPKKRVKR (94 aa)) constitute a propeptide that is removed on maturation. The Lumenal segment spans residues 117-871 (DYILLDNDVH…TLLIDSNKSS (755 aa)). Residue aspartate 124 participates in Ca(2+) binding. The interval 130-160 (PFRRSVLNRDGTRRAQRQQPQSPREIPSLPF) is disordered. Residues 168 to 483 (QWYLHGGAVG…YGLIDGGALV (316 aa)) enclose the Peptidase S8 domain. Residue asparagine 195 is glycosylated (N-linked (GlcNAc...) asparagine). Residue aspartate 202 is the Charge relay system of the active site. Residue aspartate 203 participates in substrate binding. Residues aspartate 211, aspartate 223, aspartate 228, and aspartate 230 each coordinate Ca(2+). The tract at residues 211 to 242 (DLAANYDPLASTDINDHDDDPTPQNNGDNKHG) is disordered. Residue 238-239 (DN) participates in substrate binding. Histidine 241 functions as the Charge relay system in the catalytic mechanism. Residues leucine 252, asparagine 255, glutamine 257, and glycine 259 each coordinate Ca(2+). Disulfide bonds link cysteine 258/cysteine 407 and cysteine 350/cysteine 380. Substrate is bound by residues glutamate 283, 300-305 (SWGPED), aspartate 311, and 339-342 (ASGN). Aspartate 305 contributes to the Ca(2+) binding site. Aspartate 348 contributes to the Ca(2+) binding site. 2 residues coordinate substrate: aspartate 353 and tyrosine 355. Glutamate 378 provides a ligand contact to Ca(2+). Serine 415 serves as the catalytic Charge relay system. Serine 415 contacts substrate. The region spanning 491–629 (TVPEQHICTY…TLLLYGTADP (139 aa)) is the P/Homo B domain. Cysteine 498 and cysteine 527 are oxidised to a cystine. N-linked (GlcNAc...) asparagine glycosylation occurs at asparagine 519. 3 FU repeats span residues 674–723 (NCHD…YYLD), 725–777 (DKCK…LVAD), and 804–850 (GKCD…STKS). Asparagine 868 carries an N-linked (GlcNAc...) asparagine glycan. A helical transmembrane segment spans residues 872-892 (GFGLMFWIVVSLIAACGICAC). The Cytoplasmic segment spans residues 893–942 (KKCASETKSSNVEYAPLAQYNATNGAINLGAHTDDEDDDEDEVFVNPQIV). Residues 922 to 942 (GAHTDDEDDDEDEVFVNPQIV) are disordered. Residues 926 to 935 (DDEDDDEDEV) show a composition bias toward acidic residues.

This sequence belongs to the peptidase S8 family. Furin subfamily. Ca(2+) serves as cofactor. In terms of tissue distribution, in larvae and adults, expressed in all hypodermal cells, vulva and ventral nerve cords. Most highly expressed isoform in the embryonic epidermis. As to expression, expressed primarily in the germline. In terms of tissue distribution, expressed primarily in pharyngeal epithelial cells.

Its subcellular location is the membrane. Its function is as follows. Serine endoprotease which cleaves proproteins at paired basic amino acids at the consensus RX(K/R)R motif. Involved in N-terminal processing of cuticle collagens and plays a role in cuticle biosynthesis. May cleave both sqt-3 and dpy-17 collagens to promote their secretion. Acts in ASEL sensory neurons to regulate high salt chemotaxis responses probably by cleaving insulin-like protein ins-6 into its mature and active form. Essential for embryonic and larval development. Involved in cuticle biosynthesis but dispensable for larval development. The sequence is that of Endoprotease bli-4 (bli-4) from Caenorhabditis elegans.